A 449-amino-acid chain; its full sequence is Wilms tumor protein homolog (449 aa).

Residues 48 to 84 form a disordered region; it reads YGSLGGPAPPPAPPPPPPPPPHSFIKQEPSWGGAEPH. The span at 54-69 shows a compositional bias: pro residues; that stretch reads PAPPPAPPPPPPPPPH. Glycyl lysine isopeptide (Lys-Gly) (interchain with G-Cter in SUMO) cross-links involve residues lysine 73 and lysine 177. Residues 236-244 carry the 9aaTAD motif; it reads MTWNQMNLG. 3 consecutive C2H2-type zinc fingers follow at residues 323–347, 353–377, and 383–405; these read FMCA…SRKH, YQCD…QRRH, and FQCK…TRTH. Important for interaction with target DNA regions lie at residues 367–381 and 393–401; these read SDQL…TGVK and SRSDHLKTH. The short motif at 408-410 is the KTS motif element; that stretch reads KTS. Residues 414-438 form a C2H2-type 4 zinc finger; sequence FSCRWPSCQKKFARSDELVRHHNMH. Lysine 444 is covalently cross-linked (Glycyl lysine isopeptide (Lys-Gly) (interchain with G-Cter in SUMO2)).

It belongs to the EGR C2H2-type zinc-finger protein family. In terms of assembly, interacts with ZNF224 via the zinc-finger region. Interacts with WTAP, AMER1 and SRY. Homodimer. Interacts with WTIP. Interacts with actively translating polysomes. Detected in nuclear ribonucleoprotein (mRNP) particles. Interacts with U2AF2. Interacts with HNRNPU via the zinc-finger region. Interacts with CITED2. Interacts with RBM4.

It is found in the nucleus speckle. Its subcellular location is the nucleus. The protein localises to the nucleoplasm. It localises to the nucleolus. The protein resides in the cytoplasm. In terms of biological role, transcription factor that plays an important role in cellular development and cell survival. Recognizes and binds to the DNA sequence 5'-GCG(T/G)GGGCG-3'. Regulates the expression of numerous target genes, including EPO. Plays an essential role for development of the urogenital system. It has a tumor suppressor as well as an oncogenic role in tumor formation. Function may be isoform-specific: isoforms lacking the KTS motif may act as transcription factors. Isoforms containing the KTS motif may bind mRNA and play a role in mRNA metabolism or splicing. Isoform 1 has lower affinity for DNA, and can bind RNA. In Sus scrofa (Pig), this protein is Wilms tumor protein homolog (WT1).